An 87-amino-acid polypeptide reads, in one-letter code: UPF0335 protein Avi_3695 (87 aa).

It belongs to the UPF0335 family.

This Allorhizobium ampelinum (strain ATCC BAA-846 / DSM 112012 / S4) (Agrobacterium vitis (strain S4)) protein is UPF0335 protein Avi_3695.